The chain runs to 417 residues: Serine hydroxymethyltransferase (417 aa).

Residues L117 and 121–123 each bind (6S)-5,6,7,8-tetrahydrofolate; that span reads GHL. K226 is subject to N6-(pyridoxal phosphate)lysine.

Belongs to the SHMT family. In terms of assembly, homodimer. Pyridoxal 5'-phosphate is required as a cofactor.

The protein localises to the cytoplasm. It carries out the reaction (6R)-5,10-methylene-5,6,7,8-tetrahydrofolate + glycine + H2O = (6S)-5,6,7,8-tetrahydrofolate + L-serine. The protein operates within one-carbon metabolism; tetrahydrofolate interconversion. It participates in amino-acid biosynthesis; glycine biosynthesis; glycine from L-serine: step 1/1. Catalyzes the reversible interconversion of serine and glycine with tetrahydrofolate (THF) serving as the one-carbon carrier. This reaction serves as the major source of one-carbon groups required for the biosynthesis of purines, thymidylate, methionine, and other important biomolecules. Also exhibits THF-independent aldolase activity toward beta-hydroxyamino acids, producing glycine and aldehydes, via a retro-aldol mechanism. The protein is Serine hydroxymethyltransferase of Syntrophus aciditrophicus (strain SB).